The following is a 643-amino-acid chain: Replication protein E1 (643 aa).

The Nuclear localization signal motif lies at 86 to 88; sequence KRK. Positions 109–118 match the Nuclear export signal motif; that stretch reads LSPRLQEISL. Ser-110 carries the post-translational modification Phosphoserine; by host. Residues 152-175 show a composition bias toward polar residues; that stretch reads NTNAENGGSVHSTQSSGGDSSDNA. A disordered region spans residues 152 to 178; sequence NTNAENGGSVHSTQSSGGDSSDNAENV. The DNA-binding region stretch occupies residues 179-345; the sequence is DPHCSITELK…LTIIQHGIDD (167 aa). The 151-residue stretch at 444–594 folds into the SF3 helicase domain; that stretch reads VEFISFLRAL…FPFDKNGNPV (151 aa). 470-477 is an ATP binding site; it reads GPANTGKS. Residue Lys-551 forms a Glycyl lysine isopeptide (Lys-Gly) (interchain with G-Cter in SUMO) linkage.

It belongs to the papillomaviridae E1 protein family. In terms of assembly, can form hexamers. Interacts with E2 protein; this interaction increases E1 DNA binding specificity. Interacts with host DNA polymerase subunit POLA2. Interacts with host single stranded DNA-binding protein RPA1. Interacts with host TOP1; this interaction stimulates the enzymatic activity of TOP1. Phosphorylated. In terms of processing, sumoylated.

The protein resides in the host nucleus. It carries out the reaction Couples ATP hydrolysis with the unwinding of duplex DNA by translocating in the 3'-5' direction.. The catalysed reaction is ATP + H2O = ADP + phosphate + H(+). In terms of biological role, ATP-dependent DNA 3'-5' helicase required for initiation of viral DNA replication. It forms a complex with the viral E2 protein. The E1-E2 complex binds to the replication origin which contains binding sites for both proteins. During the initial step, a dimer of E1 interacts with a dimer of protein E2 leading to a complex that binds the viral origin of replication with high specificity. Then, a second dimer of E1 displaces the E2 dimer in an ATP-dependent manner to form the E1 tetramer. Following this, two E1 monomers are added to each half of the site, which results in the formation of two E1 trimers on the viral ori. Subsequently, two hexamers will be created. The double hexamer acts as a bi-directional helicase machinery and unwinds the viral DNA and then recruits the host DNA polymerase to start replication. The sequence is that of Replication protein E1 from Human papillomavirus 45.